The chain runs to 127 residues: Large-conductance mechanosensitive channel (127 aa).

3 helical membrane-spanning segments follow: residues 9–29 (EFAMRGNVMDLAVAVVMGVAF), 32–52 (IVTALVDGIIMPCVGLLLGGV), and 75–95 (VIDFIIVAFAIFILIKLINLL).

It belongs to the MscL family. In terms of assembly, homopentamer.

Its subcellular location is the cell inner membrane. Channel that opens in response to stretch forces in the membrane lipid bilayer. May participate in the regulation of osmotic pressure changes within the cell. The sequence is that of Large-conductance mechanosensitive channel from Legionella pneumophila (strain Lens).